The chain runs to 104 residues: Large ribosomal subunit protein bL21c (104 aa).

This sequence belongs to the bacterial ribosomal protein bL21 family. As to quaternary structure, part of the 50S ribosomal subunit.

It is found in the plastid. Its subcellular location is the chloroplast. Its function is as follows. This protein binds to 23S rRNA. In Pyropia yezoensis (Susabi-nori), this protein is Large ribosomal subunit protein bL21c.